The chain runs to 986 residues: Ephrin type-B receptor 2 (986 aa).

Residues 1 to 18 (MAVRRLGAALLLLPLLAA) form the signal peptide. Over 19 to 543 (VEETLMDSTT…QTSIKEKLPL (525 aa)) the chain is Extracellular. Residues 20–202 (EETLMDSTTA…FYRKCPRIIQ (183 aa)) enclose the Eph LBD domain. 2 disulfide bridges follow: Cys-62–Cys-184 and Cys-97–Cys-107. N-linked (GlcNAc...) asparagine glycosylation is found at Asn-265, Asn-336, Asn-428, and Asn-482. Fibronectin type-III domains follow at residues 324–434 (IPSA…TNQA) and 435–530 (APSA…TMTE). Residues 544–564 (IVGSSAAGLVFLIAVVVIAIV) traverse the membrane as a helical segment. Residues 565 to 986 (CNRRGFERAD…QMNQIQSVEV (422 aa)) lie on the Cytoplasmic side of the membrane. Residues 621-884 (VKIEQVIGAG…QIVNTLDKMI (264 aa)) enclose the Protein kinase domain. ATP-binding positions include 627 to 635 (IGAGEFGEV) and Lys-653. The Proton acceptor role is filled by Asp-746. Lys-891 participates in a covalent cross-link: Glycyl lysine isopeptide (Lys-Gly) (interchain with G-Cter in ubiquitin). One can recognise an SAM domain in the interval 913–977 (TSFNTVDEWL…LNSIQVMRAQ (65 aa)). Positions 984–986 (VEV) match the PDZ-binding motif.

The protein belongs to the protein kinase superfamily. Tyr protein kinase family. Ephrin receptor subfamily. As to quaternary structure, heterotetramer upon binding of the ligand. The heterotetramer is composed of an ephrin dimer and a receptor dimer. Interacts (via PDZ-binding motif) with GRIP1 and PICK1 (via PDZ domain). Interacts with ARHGEF15; mediates ARHGEF15 phosphorylation, ubiquitination and degradation by the proteasome. Interacts with AQP1; involved in endolymph production in the inner ear. Interacts with EFNA5. Interacts with SPSB1. Interacts with SPSB4. Interacts with SH2D3C. Autophosphorylated; ligand binding stimulates autophosphorylation on tyrosine residues. In terms of processing, ligand binding induces cleavage by matrix metalloproteinases (MMPs) such as MMP7/MMP9, producing an EphB2/N-terminal fragment (NTF) and a C-terminal long fragment (EphB2-LF). EphB2-LF is further cleaved by MMPs, producing EphB2/CTF1 which is further cleaved by the PS1/gamma-secretase producing EphB2/CTF2. Post-translationally, polyubiquitinated; ligand binding stimulates ubiquitination. Ubiquitinated by RNF186 at Lys-891, mainly through 'Lys-27'-linked polyubiquitin chains. Ubiquitinated by CRL2(KLHDC2) E3 ligase complex. As to expression, expressed in the epithelial dark cells of the inner ear. Expressed in the region of the proximal tubules of the kidney nephron. Expressed in myogenic progenitor cells.

The protein resides in the cell membrane. The protein localises to the cell projection. Its subcellular location is the axon. It localises to the dendrite. It carries out the reaction L-tyrosyl-[protein] + ATP = O-phospho-L-tyrosyl-[protein] + ADP + H(+). Functionally, receptor tyrosine kinase which binds promiscuously transmembrane ephrin-B family ligands residing on adjacent cells, leading to contact-dependent bidirectional signaling into neighboring cells. The signaling pathway downstream of the receptor is referred to as forward signaling while the signaling pathway downstream of the ephrin ligand is referred to as reverse signaling. Functions in axon guidance during development. Involved in the guidance of commissural axons, that form a major interhemispheric connection between the 2 temporal lobes of the cerebral cortex. Also involved in guidance of contralateral inner ear efferent growth cones at the midline and of retinal ganglion cell axons to the optic disk. In addition to axon guidance, also regulates dendritic spines development and maturation and stimulates the formation of excitatory synapses. Upon activation by EFNB1, abolishes the ARHGEF15-mediated negative regulation on excitatory synapse formation. Controls other aspects of development including angiogenesis, palate development and in inner ear development through regulation of endolymph production. Forward and reverse signaling through the EFNB2/EPHB2 complex regulate movement and adhesion of cells that tubularize the urethra and septate the cloaca. May function as a tumor suppressor. May be involved in the regulation of platelet activation and blood coagulation. This is Ephrin type-B receptor 2 from Mus musculus (Mouse).